A 67-amino-acid polypeptide reads, in one-letter code: Phycobilisome 7.8 kDa linker polypeptide, allophycocyanin-associated, core (67 aa).

Residues methionine 1–phenylalanine 56 form the CpcD-like domain.

It belongs to the phycobilisome linker protein family.

Its subcellular location is the cellular thylakoid membrane. Rod linker protein, associated with allophycocyanin. Linker polypeptides determine the state of aggregation and the location of the disk-shaped phycobiliprotein units within the phycobilisome and modulate their spectroscopic properties in order to mediate a directed and optimal energy transfer. The polypeptide is Phycobilisome 7.8 kDa linker polypeptide, allophycocyanin-associated, core (apcC) (Thermosynechococcus vestitus (strain NIES-2133 / IAM M-273 / BP-1)).